Consider the following 463-residue polypeptide: L-seryl-tRNA(Sec) selenium transferase (463 aa).

K295 carries the N6-(pyridoxal phosphate)lysine modification.

Belongs to the SelA family. As to quaternary structure, homodecamer; pentamer of dimers. Binds only one seryl-tRNA(Sec) per dimer. Pyridoxal 5'-phosphate is required as a cofactor.

It localises to the cytoplasm. The enzyme catalyses L-seryl-tRNA(Sec) + selenophosphate + H(+) = L-selenocysteinyl-tRNA(Sec) + phosphate. The protein operates within aminoacyl-tRNA biosynthesis; selenocysteinyl-tRNA(Sec) biosynthesis; selenocysteinyl-tRNA(Sec) from L-seryl-tRNA(Sec) (bacterial route): step 1/1. Converts seryl-tRNA(Sec) to selenocysteinyl-tRNA(Sec) required for selenoprotein biosynthesis. This chain is L-seryl-tRNA(Sec) selenium transferase, found in Escherichia coli O17:K52:H18 (strain UMN026 / ExPEC).